A 294-amino-acid polypeptide reads, in one-letter code: Shikimate dehydrogenase (NADP(+)) (294 aa).

Shikimate is bound by residues 22–24 (SLS) and Ser-69. The Proton acceptor role is filled by Lys-73. Shikimate contacts are provided by Asn-94 and Asp-111. NADP(+) is bound by residues 135-139 (GAGGA) and Leu-236. Tyr-238 lines the shikimate pocket. Gly-260 is an NADP(+) binding site.

Belongs to the shikimate dehydrogenase family. As to quaternary structure, homodimer.

The enzyme catalyses shikimate + NADP(+) = 3-dehydroshikimate + NADPH + H(+). It participates in metabolic intermediate biosynthesis; chorismate biosynthesis; chorismate from D-erythrose 4-phosphate and phosphoenolpyruvate: step 4/7. Its function is as follows. Involved in the biosynthesis of the chorismate, which leads to the biosynthesis of aromatic amino acids. Catalyzes the reversible NADPH linked reduction of 3-dehydroshikimate (DHSA) to yield shikimate (SA). The sequence is that of Shikimate dehydrogenase (NADP(+)) from Streptococcus equi subsp. zooepidemicus (strain MGCS10565).